The following is a 259-amino-acid chain: Protein YIF1B (259 aa).

Methionine 1 is modified (N-acetylmethionine). The tract at residues methionine 1–proline 61 is disordered. The Cytoplasmic segment spans residues proline 9 to aspartate 153. Threonine 12 is subject to Phosphothreonine. A compositionally biased stretch (basic residues) spans arginine 14 to valine 24. Serine 64 bears the Phosphoserine mark. The chain crosses the membrane as a helical span at residues leucine 154–threonine 174. The Extracellular portion of the chain corresponds to glutamine 175–leucine 186. A helical transmembrane segment spans residues leucine 187–phenylalanine 207. The Cytoplasmic portion of the chain corresponds to methionine 208–tyrosine 237. The chain crosses the membrane as a helical span at residues leucine 238–valine 258. Position 259 (arginine 259) is a topological domain, extracellular.

Belongs to the YIF1 family. As to quaternary structure, interacts with HTR1A (via C-terminus). Interacts with ABCB9 (via TMD0); this interaction allows (but is not essential) the ER-to-Golgi trafficking and strongly depends on a salt bridge within TMD0. In terms of tissue distribution, highly expressed in brain. Expressed in heart, kidney, and lung and lower levels in spleen, muscle, and intestine (at protein level). Expressed in serotoninergic neurons (at protein level).

The protein resides in the endoplasmic reticulum membrane. It localises to the golgi apparatus membrane. Its subcellular location is the endoplasmic reticulum-Golgi intermediate compartment membrane. Its function is as follows. Functions in endoplasmic reticulum to Golgi vesicle-mediated transport and regulates the proper organization of the endoplasmic reticulum and the Golgi. Plays a key role in targeting to neuronal dendrites receptors such as HTR1A. Plays also a role in primary cilium and sperm flagellum assembly probably through protein transport to these compartments. This Rattus norvegicus (Rat) protein is Protein YIF1B.